A 925-amino-acid polypeptide reads, in one-letter code: Isoleucine--tRNA ligase (925 aa).

Positions Pro57–His67 match the 'HIGH' region motif. An L-isoleucyl-5'-AMP-binding site is contributed by Glu556. The short motif at Lys597–Ser601 is the 'KMSKS' region element. Position 600 (Lys600) interacts with ATP. The Zn(2+) site is built by Cys890, Cys893, Cys910, and Cys913.

The protein belongs to the class-I aminoacyl-tRNA synthetase family. IleS type 1 subfamily. Monomer. Zn(2+) serves as cofactor.

The protein resides in the cytoplasm. The enzyme catalyses tRNA(Ile) + L-isoleucine + ATP = L-isoleucyl-tRNA(Ile) + AMP + diphosphate. Catalyzes the attachment of isoleucine to tRNA(Ile). As IleRS can inadvertently accommodate and process structurally similar amino acids such as valine, to avoid such errors it has two additional distinct tRNA(Ile)-dependent editing activities. One activity is designated as 'pretransfer' editing and involves the hydrolysis of activated Val-AMP. The other activity is designated 'posttransfer' editing and involves deacylation of mischarged Val-tRNA(Ile). The sequence is that of Isoleucine--tRNA ligase from Carboxydothermus hydrogenoformans (strain ATCC BAA-161 / DSM 6008 / Z-2901).